The chain runs to 601 residues: CDPK-related kinase 5 (601 aa).

The segment covering 1–19 has biased composition (polar residues); sequence MGLCTSKPNSSNSDQTPAR. Disordered stretches follow at residues 1–55 and 70–98; these read MGLC…KSPF and KKTPARSPATNSTNSTPKRFFKRPFPPPS. A lipid anchor (N-myristoyl glycine) is attached at Gly-2. Residues 26-35 are compositionally biased toward low complexity; that stretch reads SESVKPSSSS. Residues 36–48 are compositionally biased toward polar residues; the sequence is VNGEDQCVTTTNN. The Protein kinase domain maps to 148–410; the sequence is YELGDEVGRG…AAQALSHPWI (263 aa). ATP is bound by residues 154 to 162 and Lys-180; that span reads VGRGHFGYT. Catalysis depends on Asp-276, which acts as the Proton acceptor. Ser-316 carries the post-translational modification Phosphoserine. Positions 415 to 445 are autoinhibitory domain; the sequence is DAKVPMDILVFKLMRAYLRSSSLRKAALRAL. Residues 434–454 are calmodulin binding (CaMBD); the sequence is SSSLRKAALRALSKTLTVDEL. 4 EF-hand domains span residues 452–488, 489–524, 525–564, and 567–596; these read DELFYLREQFALLEPSKNGTISLENIKSALMKMATDA, MKDSRIPEFLGQLSALQYRRMDFEEFCAAALSVHQL, EALDRWEQHARCAYELFEKEGNRPIMIDELASELGLGPSV, and HAVLHDWLRHTDGKLSFLGFVKLLHGVSSR. The Ca(2+) site is built by Ser-467, Asn-469, Thr-471, Asn-476, Arg-508, Glu-513, Asn-546, Glu-553, Asp-578, and Lys-580. Ser-582 bears the Phosphoserine mark.

This sequence belongs to the protein kinase superfamily. Ser/Thr protein kinase family. CDPK subfamily. As to quaternary structure, binds calmodulin (CaM) in a calcium-dependent manner.

The protein resides in the membrane. It catalyses the reaction L-seryl-[protein] + ATP = O-phospho-L-seryl-[protein] + ADP + H(+). The enzyme catalyses L-threonyl-[protein] + ATP = O-phospho-L-threonyl-[protein] + ADP + H(+). With respect to regulation, activated by calcium and calmodulin. Autophosphorylation may play an important role in the regulation of the kinase activity. May play a role in signal transduction pathways that involve calcium as a second messenger. This chain is CDPK-related kinase 5 (CRK5), found in Arabidopsis thaliana (Mouse-ear cress).